Consider the following 600-residue polypeptide: Proline--tRNA ligase (600 aa).

This sequence belongs to the class-II aminoacyl-tRNA synthetase family. ProS type 1 subfamily. Homodimer.

The protein resides in the cytoplasm. The catalysed reaction is tRNA(Pro) + L-proline + ATP = L-prolyl-tRNA(Pro) + AMP + diphosphate. In terms of biological role, catalyzes the attachment of proline to tRNA(Pro) in a two-step reaction: proline is first activated by ATP to form Pro-AMP and then transferred to the acceptor end of tRNA(Pro). As ProRS can inadvertently accommodate and process non-cognate amino acids such as alanine and cysteine, to avoid such errors it has two additional distinct editing activities against alanine. One activity is designated as 'pretransfer' editing and involves the tRNA(Pro)-independent hydrolysis of activated Ala-AMP. The other activity is designated 'posttransfer' editing and involves deacylation of mischarged Ala-tRNA(Pro). The misacylated Cys-tRNA(Pro) is not edited by ProRS. The sequence is that of Proline--tRNA ligase from Synechococcus sp. (strain RCC307).